The sequence spans 464 residues: Serine/threonine-protein kinase 38-like (464 aa).

Ala2 is modified (N-acetylalanine). Positions 64-89 (KLRRSQHARKETEFLRLKRTRLGLDD) are S100B binding. At Thr75 the chain carries Phosphothreonine. Residues 90 to 383 (FESLKVIGRG…VEEIKGHPFF (294 aa)) form the Protein kinase domain. ATP is bound by residues 96–104 (IGRGAFGEV) and Lys119. Asp213 (proton acceptor) is an active-site residue. Position 282 is a phosphoserine; by autocatalysis (Ser282). One can recognise an AGC-kinase C-terminal domain in the interval 384 to 453 (EGVDWGHIRE…KRFEGLTQRG (70 aa)). A Phosphothreonine; by STK24/MST3 modification is found at Thr442.

Belongs to the protein kinase superfamily. AGC Ser/Thr protein kinase family. Homodimeric S100B binds two molecules of STK38L. Interacts with MOB1 and MOB2. Interacts with MICAL1; leading to inhibit the protein kinase activity by antagonizing activation by MST1/STK4. Mg(2+) serves as cofactor. In terms of tissue distribution, highly expressed in the large and small intestine, stomach and testis. High levels also present in the brain, in particular the neurocortex, basal forebrain, hippocampus, the amygdala, cerebellum and brainstem.

It localises to the cytoplasm. It is found in the cytoskeleton. Its subcellular location is the membrane. The enzyme catalyses L-seryl-[protein] + ATP = O-phospho-L-seryl-[protein] + ADP + H(+). The catalysed reaction is L-threonyl-[protein] + ATP = O-phospho-L-threonyl-[protein] + ADP + H(+). Its activity is regulated as follows. Activated by binding of S100B which releases autoinhibitory N-lobe interactions, enabling ATP to bind and the autophosphorylation of Ser-282. Thr-442 then undergoes calcium-dependent phosphorylation by STK24/MST3. Interactions between phosphorylated Thr-442 and the N-lobe promote additional structural changes that complete the activation of the kinase. Autoinhibition is also released by the binding of MOB1/MOBKL1A and MOB2 to the N-terminal of STK38L. Its function is as follows. Involved in the regulation of structural processes in differentiating and mature neuronal cells. The sequence is that of Serine/threonine-protein kinase 38-like from Mus musculus (Mouse).